The sequence spans 102 residues: Vacuolar ATPase assembly integral membrane protein VMA21 (102 aa).

The Cytoplasmic portion of the chain corresponds to 1–30 (MERYDKATLNAAFAPEFRQNEGSLTSTLRT). The helical transmembrane segment at 31-51 (LLFFTALMITLPVGLYFSSKA) threads the bilayer. Topologically, residues 52 to 66 (YIFEGTLGMSNRDSY) are lumenal. A helical membrane pass occupies residues 67–87 (FYAAIVAVVTVHVVLAMFVYV). Residues 88–102 (AWSEGTRQWREGKQD) are Cytoplasmic-facing.

This sequence belongs to the VMA21 family. Associates with the V0 complex of the vacuolar ATPase (V-ATPase). Interacts with ATP6AP2.

It localises to the endoplasmic reticulum membrane. It is found in the endoplasmic reticulum-Golgi intermediate compartment membrane. The protein localises to the cytoplasmic vesicle. Its subcellular location is the COPII-coated vesicle membrane. In terms of biological role, required for the assembly of the V0 complex of the vacuolar ATPase (V-ATPase) in the endoplasmic reticulum. This chain is Vacuolar ATPase assembly integral membrane protein VMA21, found in Gallus gallus (Chicken).